Here is a 1776-residue protein sequence, read N- to C-terminus: MIDDMIISLIYQEADEKLLNTLYEIFTYLNSAKLARFTLEYLISGKDESDDLFGLIPVEDLCKQKYKLLLQRLHISKPSSSDGDGTRELELIKEKLAFLEPIKADYNTSIENTTNLKTVNINIEYAQRDLNWTSVIDDINKKVKHLQDKEKSQELSRLRIKDLDPYLLTENPIERVRFTIPVPEDESTHDDDVEKNDSKEVDKENNEVPDGEILIDEGSNHINSDEEIFLEAREFLEKEINDGKETQDSKNPSEKDVEGSTCKLDHIPANREVIEGEKHISEENAISKSAPMIQRSSKRVRYRNEESSMEINDVEITRSCFVETERFFENLNSYLDLFNKEAATNLTLTNIVNIYVPEKNNNDENSAEGYVNDFLFILNDWNTRKYTHSLFVDDDTPAGSTASKSTEDEKIKLMEVLSTFGKKGDSLNSDLSKDIKDISSYETTEEIQKFLHDINENPCHYEELKLLILRKLLSIQRPKGDFKGHAAYCLITDTIWNSKLYDRIREWTIQCESIILNHLRLEGCDALGISHMLDDFSFSVAIYEILVDTYISIKDQINSMTSLNYKRTTHKPNKATLNNISLELVKIGDKLNRWTQHFEDLLERIDLSFAMMDQDFFTYYCRYKWSFIHKEKSQNTIWQEKGFIMSQLHELHDNISTKKEAEAHIPLPNYENINEISVDSIKTQVTTTSILSILAKILYAKPGTNNDEAIHLLETILISDSSPDESIEALPLNKEVSTFDKDALIAIKDFLEESPVDMKLSSWNILFSYYDENNQFAKFQHGFEQNVSFILYYLNSNTYNGLIGTKFETLAKVLGSYGKHVRIFLSHLRENNWKLSRDSHRTSSSIERTFSELLKLFELFYLFSIHEEAALISSSKLSVKARSNKAYERFKDIFISTVSVIVIYYKELLMNTVKIEESKVPSEIEKTIGNLICDFHEQLGWRRVCDAAEGLFLNLAQDILVAFDNNLFEKQLAQLISCRYHYSVSIDTFTPANHETKKTAEFDLSSTQRMADFILPLCFKKNPLKATPKSDMKLLIDEFYEVVGDPDFDSCEILSRNDSLFEHFLESTSITSRFLRDTFYGLEELDFRNPPDNANIIRSGLYYMQGLLMFASYKIRKKSTQSRAVELENIIMLLKNDLVYCTNRMESWFLLGQAYGFLVEDDLIWTSDKLTVPERKIGTANLQRKSLICYLMAINESTKANIKKDLPLKTTIGSLMALFSKEMYNAAMKPMDMHAFKVQNIPRFIKKPTGAAFVSVSTSSVNSNLCLKVIQQSLHIAIKSKRNDWTYYYYLSKVQRKLNKSPRIVLDTLQQASNIAKEQSNPSDPIIEPHYKKCSLIYKYAKEGSLSFQSGLEFLKNDMVINYEKGNKSIEKPMDFYEIIVECLKAVISYDKKRWHHKPRYRLAKVLFEEFGKITEAKEEISSIVSLKSTNKTLVSIWKPENERPGKHFYYTFQYAHFYVVLLSSDRNLIGLIQMLPKLRRSNSIMVSLYSLWETLCSSICKIIRNSLKVDEGFTERFMSSSGYQKFMMNSKSLLENMKGDGVPGELQIHLCFLHAITDMKKLNNGFGPTSLIDDTMVAIFIRIYLYFEKQSNNLKPMGTPEPTESPNEKAKKLAKRDFFPLISDMLKTFRRDIENILKDQPDIYNDFVSCSDKKVEKEGVVGKENNVNSKILEEEQSREVIKTPELKMDSINFESVSDKHITQNKLEADTILQENNDKSPKNNGIKDNENSIPDSRARTLDEMLFNKGLEKKVQGESPTAKKQKLNSDHHDSASE.

3 disordered regions span residues 180-218 (IPVPEDESTHDDDVEKNDSKEVDKENNEVPDGEILIDEG), 241-260 (NDGKETQDSKNPSEKDVEGS), and 1709-1776 (ADTI…SASE). The segment covering 190–206 (DDDVEKNDSKEVDKENN) has biased composition (basic and acidic residues). Basic and acidic residues-rich tracts occupy residues 1716–1742 (NNDKSPKNNGIKDNENSIPDSRARTLD) and 1766–1776 (LNSDHHDSASE).

The protein belongs to the HIR3 family.

The protein localises to the nucleus. Its function is as follows. Has a role in a nucleosome assembly pathway that is required for the integrity of heterochromatin and proper chromosome segregation. The protein is Histone transcription regulator 3 homolog (HIR3) of Debaryomyces hansenii (strain ATCC 36239 / CBS 767 / BCRC 21394 / JCM 1990 / NBRC 0083 / IGC 2968) (Yeast).